Consider the following 403-residue polypeptide: Leu/Ile/Val-binding protein homolog 8 (403 aa).

Positions 1–26 (MRLSRLLIGASLGVALSSTAFTAALA) are cleaved as a signal peptide.

It belongs to the leucine-binding protein family.

In terms of biological role, component of an amino-acid transport system. The polypeptide is Leu/Ile/Val-binding protein homolog 8 (Brucella suis biovar 1 (strain 1330)).